A 122-amino-acid chain; its full sequence is Large ribosomal subunit protein uL14 (122 aa).

It belongs to the universal ribosomal protein uL14 family. In terms of assembly, part of the 50S ribosomal subunit. Forms a cluster with proteins L3 and L19. In the 70S ribosome, L14 and L19 interact and together make contacts with the 16S rRNA in bridges B5 and B8.

In terms of biological role, binds to 23S rRNA. Forms part of two intersubunit bridges in the 70S ribosome. The polypeptide is Large ribosomal subunit protein uL14 (Gemmatimonas aurantiaca (strain DSM 14586 / JCM 11422 / NBRC 100505 / T-27)).